The sequence spans 179 residues: tRNA (cytidine(56)-2'-O)-methyltransferase (179 aa).

S-adenosyl-L-methionine is bound by residues L82, G112 to V116, and V130 to E137.

It belongs to the aTrm56 family. In terms of assembly, homodimer.

It localises to the cytoplasm. The catalysed reaction is cytidine(56) in tRNA + S-adenosyl-L-methionine = 2'-O-methylcytidine(56) in tRNA + S-adenosyl-L-homocysteine + H(+). Functionally, specifically catalyzes the AdoMet-dependent 2'-O-ribose methylation of cytidine at position 56 in tRNAs. The sequence is that of tRNA (cytidine(56)-2'-O)-methyltransferase from Methanococcus maripaludis (strain C7 / ATCC BAA-1331).